We begin with the raw amino-acid sequence, 200 residues long: MIGRIVGTLIEKTPPELMVDVNGIGYEVSASMTTIYDLPQIGGQVTLFTHLLVKEDSHTLYGFIDKNERALFRVLIKVNGIGPKMALAILSSMSSEELITNVQESDVTALTRIPGVGKKTAERLIIELRDKLGQAAKTDLFSAPAVLRQVQADPRQEAEAALISLGYKPQEAAKAIAGVPVDAANSEDVIKAALKGMLRK.

A domain I region spans residues Met-1–Ile-64. Residues Asp-65–Ala-143 are domain II. The segment at Pro-144–Gln-149 is flexible linker. The tract at residues Val-150–Lys-200 is domain III.

Belongs to the RuvA family. In terms of assembly, homotetramer. Forms an RuvA(8)-RuvB(12)-Holliday junction (HJ) complex. HJ DNA is sandwiched between 2 RuvA tetramers; dsDNA enters through RuvA and exits via RuvB. An RuvB hexamer assembles on each DNA strand where it exits the tetramer. Each RuvB hexamer is contacted by two RuvA subunits (via domain III) on 2 adjacent RuvB subunits; this complex drives branch migration. In the full resolvosome a probable DNA-RuvA(4)-RuvB(12)-RuvC(2) complex forms which resolves the HJ.

Its subcellular location is the cytoplasm. Functionally, the RuvA-RuvB-RuvC complex processes Holliday junction (HJ) DNA during genetic recombination and DNA repair, while the RuvA-RuvB complex plays an important role in the rescue of blocked DNA replication forks via replication fork reversal (RFR). RuvA specifically binds to HJ cruciform DNA, conferring on it an open structure. The RuvB hexamer acts as an ATP-dependent pump, pulling dsDNA into and through the RuvAB complex. HJ branch migration allows RuvC to scan DNA until it finds its consensus sequence, where it cleaves and resolves the cruciform DNA. This chain is Holliday junction branch migration complex subunit RuvA, found in Marinomonas sp. (strain MWYL1).